A 202-amino-acid chain; its full sequence is Regulator of G-protein signaling 16 (202 aa).

S-palmitoyl cysteine attachment occurs at residues cysteine 2 and cysteine 12. Residues 65–181 (SFDLLLSSKN…LKSPAYRDLA (117 aa)) form the RGS domain. Phosphotyrosine; by EGFR is present on tyrosine 168. Tyrosine 177 is modified (phosphotyrosine).

In terms of assembly, interacts with GNAI1 and GNAQ. Interacts with GNAI2, GNAI3 and GNAO1. In terms of processing, palmitoylated on Cys-2 and/or Cys-12. Phosphorylated. Phosphorylation at Tyr-168 by EGFR enhances GTPase accelerating (GAP) activity toward GNAI1. Abundantly expressed in retina with lower levels of expression in most other tissues.

The protein resides in the membrane. Its function is as follows. Regulates G protein-coupled receptor signaling cascades. Inhibits signal transduction by increasing the GTPase activity of G protein alpha subunits, thereby driving them into their inactive GDP-bound form. Plays an important role in the phototransduction cascade by regulating the lifetime and effective concentration of activated transducin alpha. May regulate extra and intracellular mitogenic signals. The sequence is that of Regulator of G-protein signaling 16 (RGS16) from Homo sapiens (Human).